Reading from the N-terminus, the 417-residue chain is MDVERLQEALKDFEKRGKKEVCPVLDQFLCHVAKTGETMIQWSQFKGYFIFKLEKVMDDFRTSAPEPRGPPNPNVEYIPFDEMKERILKIVTGFNGIPFTIQRLCELLTDPRRNYTGTDKFLRGVEKNVMVVSCVCPSSEKNNSNSLNRMNGVMFPGNSPNYTDRSNINGPGTPRPLNRPKLSLSAPLTTNGLPESTDSKDSELQLSEEKGHSDSSASESEVSLLSPVKNKHPDEDAVESEEHEVKRLKFDKEGDVRETASQTVSGEVSSVRAEETETAAPPPDKDRESRTRQHCTEEEEEEEEEEEEEEEESFMTPREMVPERKNQEKESDDALTVNEETSEESHQMEGSGVSPAQTDSTSERSDSAGASRSGSDCLETQESGGPPSSKTGESVSVPSSMESEEATEVTDDPMEQD.

The interval Lys-141–Asp-417 is disordered. Polar residues-rich tracts occupy residues Asn-158–Gly-170 and Ala-186–Ser-196. A Phosphoserine modification is found at Ser-159. Residues Thr-197–Ser-213 show a composition bias toward basic and acidic residues. A compositionally biased stretch (low complexity) spans Asp-214–Ser-226. A Phosphoserine modification is found at Ser-226. The segment covering His-243 to Glu-258 has biased composition (basic and acidic residues). A compositionally biased stretch (polar residues) spans Thr-259 to Val-268. Residues Pro-283–Thr-296 show a composition bias toward basic and acidic residues. Residues Glu-297–Ser-313 are compositionally biased toward acidic residues. The segment covering Met-320–Lys-329 has biased composition (basic and acidic residues). The segment covering Ser-367–Asp-376 has biased composition (low complexity). Residues Leu-378–Gly-392 are compositionally biased toward polar residues. The segment covering Glu-402 to Asp-417 has biased composition (acidic residues).

It belongs to the PPP4R2 family. Serine/threonine-protein phosphatase 4 (PP4) occurs in different assemblies of the catalytic and one or more regulatory subunits. Component of the PP4 complexes PPP4C-PPP4R2, PPP4C-PPP4R2-PPP4R3A and PPP4C-PPP4R2-PPP4R3B. The PPP4C-PPP4R2 complex appears to be a tetramer composed of 2 molecules of PPP4C and 2 molecules of PPP4R2. Interacts with DDX20/GEMIN3 and GEMIN4. Interacts with RPA2; this DNA damage-dependent interaction recruits PPP4C leading to RPA2 dephosphorylation.

The protein localises to the cytoplasm. It localises to the cytoskeleton. It is found in the microtubule organizing center. Its subcellular location is the centrosome. The protein resides in the nucleus. Functionally, regulatory subunit of serine/threonine-protein phosphatase 4 (PP4). May regulate the activity of PPP4C at centrosomal microtubule organizing centers. Its interaction with the SMN complex leads to enhance the temporal localization of snRNPs, suggesting a role of PPP4C in maturation of spliceosomal snRNPs. The PPP4C-PPP4R2-PPP4R3A PP4 complex specifically dephosphorylates H2AX phosphorylated on 'Ser-140' (gamma-H2AX) generated during DNA replication and required for DNA double strand break repair. Mediates RPA2 dephosphorylation by recruiting PPP4C to RPA2 in a DNA damage-dependent manner. RPA2 dephosphorylation is required for the efficient RPA2-mediated recruitment of RAD51 to chromatin following double strand breaks, an essential step for DNA repair. This chain is Serine/threonine-protein phosphatase 4 regulatory subunit 2 (Ppp4r2), found in Mus musculus (Mouse).